Reading from the N-terminus, the 341-residue chain is 3-dehydroquinate synthase (341 aa).

NAD(+) contacts are provided by residues 54-59 (DGEKYK), 88-92 (GVVTD), 112-113 (TT), Lys125, Lys133, and 151-154 (TLST). Zn(2+)-binding residues include Glu166, His220, and His236.

This sequence belongs to the sugar phosphate cyclases superfamily. Dehydroquinate synthase family. The cofactor is NAD(+). It depends on Co(2+) as a cofactor. Requires Zn(2+) as cofactor.

The protein resides in the cytoplasm. It catalyses the reaction 7-phospho-2-dehydro-3-deoxy-D-arabino-heptonate = 3-dehydroquinate + phosphate. Its pathway is metabolic intermediate biosynthesis; chorismate biosynthesis; chorismate from D-erythrose 4-phosphate and phosphoenolpyruvate: step 2/7. Functionally, catalyzes the conversion of 3-deoxy-D-arabino-heptulosonate 7-phosphate (DAHP) to dehydroquinate (DHQ). The chain is 3-dehydroquinate synthase from Thermococcus kodakarensis (strain ATCC BAA-918 / JCM 12380 / KOD1) (Pyrococcus kodakaraensis (strain KOD1)).